The chain runs to 512 residues: GTPase Obg (512 aa).

One can recognise an Obg domain in the interval 2 to 159 (ATFVDTVTLH…GDVVLELKVV (158 aa)). Positions 160–336 (ADVALVGYPS…LSFALAELVE (177 aa)) constitute an OBG-type G domain. Residues 166–173 (GYPSAGKS), 191–195 (FTTLH), 212–215 (DVPG), 288–291 (NKID), and 317–319 (STV) each bind GTP. The Mg(2+) site is built by serine 173 and threonine 193. Residues 355 to 439 (PRAVNEKPFT…GDGIVFDWEP (85 aa)) form the OCT domain. The disordered stretch occupies residues 491–512 (GEAGLWADEDGTDEDASSDAKA). Acidic residues predominate over residues 497–512 (ADEDGTDEDASSDAKA).

The protein belongs to the TRAFAC class OBG-HflX-like GTPase superfamily. OBG GTPase family. Monomer. Mg(2+) is required as a cofactor.

The protein resides in the cytoplasm. In terms of biological role, an essential GTPase which binds GTP, GDP and possibly (p)ppGpp with moderate affinity, with high nucleotide exchange rates and a fairly low GTP hydrolysis rate. Plays a role in control of the cell cycle, stress response, ribosome biogenesis and in those bacteria that undergo differentiation, in morphogenesis control. This is GTPase Obg from Clavibacter michiganensis subsp. michiganensis (strain NCPPB 382).